Consider the following 132-residue polypeptide: Small ribosomal subunit protein uS8 (132 aa).

Belongs to the universal ribosomal protein uS8 family. As to quaternary structure, part of the 30S ribosomal subunit. Contacts proteins S5 and S12.

One of the primary rRNA binding proteins, it binds directly to 16S rRNA central domain where it helps coordinate assembly of the platform of the 30S subunit. The protein is Small ribosomal subunit protein uS8 of Streptococcus gordonii (strain Challis / ATCC 35105 / BCRC 15272 / CH1 / DL1 / V288).